Consider the following 102-residue polypeptide: Small ribosomal subunit protein uS10 (102 aa).

It belongs to the universal ribosomal protein uS10 family. As to quaternary structure, part of the 30S ribosomal subunit.

Functionally, involved in the binding of tRNA to the ribosomes. This Methanothrix thermoacetophila (strain DSM 6194 / JCM 14653 / NBRC 101360 / PT) (Methanosaeta thermophila) protein is Small ribosomal subunit protein uS10.